A 480-amino-acid chain; its full sequence is Histone-lysine N-methyltransferase ASHR1 (480 aa).

Positions 11–248 (RCLGVSNLPQ…KDSEITISYI (238 aa)) constitute an SET domain. Zn(2+) is bound by residues Cys56, Cys59, Cys68, Cys71, Cys77, Cys81, His89, and Cys93. The segment at 56 to 93 (CDGCFKTNNLKKCSACQVVWYCGSSCQKSEWKLHRDEC) adopts an MYND-type zinc-finger fold.

This sequence belongs to the class V-like SAM-binding methyltransferase superfamily. Histone-lysine methyltransferase family. SET2 subfamily.

It localises to the nucleus. It is found in the chromosome. The enzyme catalyses L-lysyl-[histone] + S-adenosyl-L-methionine = N(6)-methyl-L-lysyl-[histone] + S-adenosyl-L-homocysteine + H(+). In terms of biological role, histone methyltransferase. In Arabidopsis thaliana (Mouse-ear cress), this protein is Histone-lysine N-methyltransferase ASHR1 (ASHR1).